We begin with the raw amino-acid sequence, 95 residues long: Aspartyl/glutamyl-tRNA(Asn/Gln) amidotransferase subunit C (95 aa).

It belongs to the GatC family. In terms of assembly, heterotrimer of A, B and C subunits.

It carries out the reaction L-glutamyl-tRNA(Gln) + L-glutamine + ATP + H2O = L-glutaminyl-tRNA(Gln) + L-glutamate + ADP + phosphate + H(+). It catalyses the reaction L-aspartyl-tRNA(Asn) + L-glutamine + ATP + H2O = L-asparaginyl-tRNA(Asn) + L-glutamate + ADP + phosphate + 2 H(+). In terms of biological role, allows the formation of correctly charged Asn-tRNA(Asn) or Gln-tRNA(Gln) through the transamidation of misacylated Asp-tRNA(Asn) or Glu-tRNA(Gln) in organisms which lack either or both of asparaginyl-tRNA or glutaminyl-tRNA synthetases. The reaction takes place in the presence of glutamine and ATP through an activated phospho-Asp-tRNA(Asn) or phospho-Glu-tRNA(Gln). The sequence is that of Aspartyl/glutamyl-tRNA(Asn/Gln) amidotransferase subunit C from Pseudomonas putida (strain ATCC 700007 / DSM 6899 / JCM 31910 / BCRC 17059 / LMG 24140 / F1).